We begin with the raw amino-acid sequence, 217 residues long: MSESHLYTYGIIDDNESLALNVDGVAGATRAYTVSYRSLSAVVSDIETTDPERTDAAVEAHNTVLQAVLEHDATRAVVPMSFGMAFKNARTLKGVLRGARRALRSTLTEIAGTVELGVKVLAPGDDTAVDTAAVRSDVTARLSALSVGETENDCFTDRLIINKSYLVEHDTRDAFDAAIDEIDAAHDDLTVRYTGPWPPYNFVDIHIGAEQAQQGGR.

Belongs to the gas vesicle GvpF/GvpL family. As to quaternary structure, binds GvpA.

The protein localises to the gas vesicle. It localises to the cytoplasm. A minor component of the gas vesicle, may be involved in preventing GvpA aggregation during gas vesicle nucleation. Gas vesicles are hollow, gas filled proteinaceous nanostructures found in several microbial planktonic microorganisms. They allow positioning of halobacteria at the optimal depth for growth in the poorly aerated, shallow brine pools of their habitat. In terms of biological role, expression of 2 c-vac DNA fragments containing 2 divergently transcribed regions (gvpE-gvpF-gvpG-gvpH-gvpI-gvpJ-gvpK-gvpL-gvpM and gvpA-gvpC-gvpN-gvpO) allows H.volcanii to produce gas vesicles. Note that gvpD is not necessary for gas vesicle formation. This Halobacterium salinarum (strain ATCC 700922 / JCM 11081 / NRC-1) (Halobacterium halobium) protein is Gas vesicle protein F2.